Here is a 950-residue protein sequence, read N- to C-terminus: Glycine dehydrogenase (decarboxylating) (950 aa).

Lysine 698 carries the post-translational modification N6-(pyridoxal phosphate)lysine.

The protein belongs to the GcvP family. The glycine cleavage system is composed of four proteins: P, T, L and H. The cofactor is pyridoxal 5'-phosphate.

It catalyses the reaction N(6)-[(R)-lipoyl]-L-lysyl-[glycine-cleavage complex H protein] + glycine + H(+) = N(6)-[(R)-S(8)-aminomethyldihydrolipoyl]-L-lysyl-[glycine-cleavage complex H protein] + CO2. Functionally, the glycine cleavage system catalyzes the degradation of glycine. The P protein binds the alpha-amino group of glycine through its pyridoxal phosphate cofactor; CO(2) is released and the remaining methylamine moiety is then transferred to the lipoamide cofactor of the H protein. In Neisseria meningitidis serogroup C / serotype 2a (strain ATCC 700532 / DSM 15464 / FAM18), this protein is Glycine dehydrogenase (decarboxylating).